The chain runs to 450 residues: Glutamyl-tRNA reductase (450 aa).

Substrate is bound by residues threonine 50–arginine 53, serine 109, glutamate 114–glutamine 116, and glutamine 120. Cysteine 51 acts as the Nucleophile in catalysis. Glycine 189–alanine 194 is a binding site for NADP(+). A disordered region spans residues asparagine 422–leucine 450.

It belongs to the glutamyl-tRNA reductase family. Homodimer.

The catalysed reaction is (S)-4-amino-5-oxopentanoate + tRNA(Glu) + NADP(+) = L-glutamyl-tRNA(Glu) + NADPH + H(+). Its pathway is porphyrin-containing compound metabolism; protoporphyrin-IX biosynthesis; 5-aminolevulinate from L-glutamyl-tRNA(Glu): step 1/2. In terms of biological role, catalyzes the NADPH-dependent reduction of glutamyl-tRNA(Glu) to glutamate 1-semialdehyde (GSA). This chain is Glutamyl-tRNA reductase, found in Oleidesulfovibrio alaskensis (strain ATCC BAA-1058 / DSM 17464 / G20) (Desulfovibrio alaskensis).